We begin with the raw amino-acid sequence, 121 residues long: Basic phospholipase A2 homolog BaTX (121 aa).

7 disulfide bridges follow: Cys26–Cys115, Cys28–Cys44, Cys43–Cys95, Cys49–Cys121, Cys50–Cys88, Cys57–Cys81, and Cys75–Cys86. The interval 105–117 (KKYRYYLKPLCKK) is important for membrane-damaging activities in eukaryotes and bacteria; heparin-binding.

The protein belongs to the phospholipase A2 family. Group II subfamily. K49 sub-subfamily. In terms of assembly, homodimer; non-covalently linked. As to expression, expressed by the venom gland.

The protein resides in the secreted. Snake venom phospholipase A2 homolog that lacks enzymatic activity. Is myotoxic and displays edema-inducing activities. In vitro, produced time-dependent, irreversible neuromuscular blockade in isolated mouse phrenic nerve-diaphragm and chick biventer cervicis preparations. A model of myotoxic mechanism has been proposed: an apo Lys49-PLA2 is activated by the entrance of a hydrophobic molecule (e.g. fatty acid) at the hydrophobic channel of the protein leading to a reorientation of a monomer. This reorientation causes a transition between 'inactive' to 'active' states, causing alignment of C-terminal and membrane-docking sites (MDoS) side-by-side and putting the membrane-disruption sites (MDiS) in the same plane, exposed to solvent and in a symmetric position for both monomers. The MDoS region stabilizes the toxin on membrane by the interaction of charged residues with phospholipid head groups. Subsequently, the MDiS region destabilizes the membrane with penetration of hydrophobic residues. This insertion causes a disorganization of the membrane, allowing an uncontrolled influx of ions (i.e. calcium and sodium), and eventually triggering irreversible intracellular alterations and cell death. In Bothrops alternatus (Urutu), this protein is Basic phospholipase A2 homolog BaTX.